The following is a 137-amino-acid chain: Phospholipase A2 group V (137 aa).

The first 20 residues, 1-20 (MKRLLTLAWFLACSVPAVPG), serve as a signal peptide directing secretion. 6 disulfides stabilise this stretch: Cys46-Cys137, Cys48-Cys64, Cys63-Cys117, Cys70-Cys110, Cys79-Cys103, and Cys97-Cys108. Ca(2+) contacts are provided by Tyr47, Gly49, and Gly51. Residue His67 is part of the active site. Position 68 (Asp68) interacts with Ca(2+). The active site involves Asp111.

The protein belongs to the phospholipase A2 family. It depends on Ca(2+) as a cofactor. This enzyme lacks one of the seven disulfide bonds found in similar PA2 proteins.

It localises to the secreted. It is found in the cell membrane. Its subcellular location is the cytoplasmic vesicle. The protein localises to the phagosome. The protein resides in the recycling endosome. It localises to the golgi apparatus. It is found in the cis-Golgi network. Its subcellular location is the trans-Golgi network. It carries out the reaction a 1,2-diacyl-sn-glycero-3-phosphocholine + H2O = a 1-acyl-sn-glycero-3-phosphocholine + a fatty acid + H(+). It catalyses the reaction 1-hexadecanoyl-2-(9Z-octadecenoyl)-sn-glycero-3-phosphocholine + H2O = 1-hexadecanoyl-sn-glycero-3-phosphocholine + (9Z)-octadecenoate + H(+). The catalysed reaction is 1-hexadecanoyl-2-(5Z,8Z,11Z,14Z-eicosatetraenoyl)-sn-glycero-3-phosphocholine + H2O = 1-hexadecanoyl-sn-glycero-3-phosphocholine + (5Z,8Z,11Z,14Z)-eicosatetraenoate + H(+). The enzyme catalyses 1-hexadecanoyl-2-(9Z,12Z-octadecadienoyl)-sn-glycero-3-phosphoethanolamine + H2O = 1-hexadecanoyl-sn-glycero-3-phosphoethanolamine + (9Z,12Z)-octadecadienoate + H(+). It carries out the reaction 1-hexadecanoyl-2-(5Z,8Z,11Z,14Z-eicosatetraenoyl)-sn-glycero-3-phosphoethanolamine + H2O = 1-hexadecanoyl-sn-glycero-3-phosphoethanolamine + (5Z,8Z,11Z,14Z)-eicosatetraenoate + H(+). It catalyses the reaction 1-octadecanoyl-2-(5Z,8Z,11Z,14Z-eicosatetraenoyl)-sn-glycero-3-phospho-(1D-myo-inositol) + H2O = 1-octadecanoyl-sn-glycero-3-phospho-(1D-myo-inositol) + (5Z,8Z,11Z,14Z)-eicosatetraenoate + H(+). The catalysed reaction is 1-hexadecanoyl-2-(9Z-octadecenoyl)-sn-glycero-3-phosphoglycerol + H2O = 1-hexadecanoyl-sn-glycero-3-phosphoglycerol + (9Z)-octadecenoate + H(+). The enzyme catalyses N-hexadecanoyl-1,2-di-(9Z-octadecenoyl)-sn-glycero-3-phosphoethanolamine + H2O = N-hexadecanoyl-1-(9Z-octadecenoyl)-sn-glycero-3-phosphoethanolamine + (9Z)-octadecenoate + H(+). It carries out the reaction 1'-[1,2-di-(9Z-octadecenoyl)-sn-glycero-3-phospho]-3'-[1-(9Z-octadecenoyl)-sn-glycero-3-phospho]-glycerol + H2O = 1',3'-bis-[1-(9Z-octadecenoyl)-sn-glycero-3-phospho]-glycerol + (9Z)-octadecenoate + H(+). It catalyses the reaction 1',3'-bis[1,2-di-(9Z-octadecenoyl)-sn-glycero-3-phospho]-glycerol + H2O = 1'-[1,2-di-(9Z-octadecenoyl)-sn-glycero-3-phospho]-3'-[1-(9Z-octadecenoyl)-sn-glycero-3-phospho]-glycerol + (9Z)-octadecenoate + H(+). Its pathway is lipid metabolism; phospholipid metabolism. The protein operates within lipid metabolism; leukotriene B4 biosynthesis. It participates in lipid metabolism; leukotriene C4 biosynthesis. In terms of biological role, secretory calcium-dependent phospholipase A2 that primarily targets extracellular phospholipids. Hydrolyzes the ester bond of the fatty acyl group attached at sn-2 position of phospholipids (phospholipase A2 activity), preferentially releasing fatty acyl groups with a low degree of unsaturation such as oleoyl (C18:1) and linoleoyl (C18:2) groups. Hydrolyzes low-density lipoprotein (LDL) phospholipids releasing unsaturated fatty acids that drive macrophage polarization toward an M2 phenotype. May act in an autocrine and paracrine manner. Contributes to lipid remodeling of cellular membranes at different subcellular locations and generation of lipid mediators involved in pathogen clearance. Cleaves sn-2 fatty acyl chains of cardiolipin, a major component of the inner membrane of mitochondria and bacterial membranes. Promotes phagocytosis of bacteria in macrophages through production of lysophosphatidylethanolamines. Displays bactericidal activity against Gram-positive bacteria by directly hydrolyzing phospholipids of the bacterial membrane. Promotes phagocytosis and killing of ingested fungi likely through controlling phagosome-lysosome fusion and phagosome maturation. Plays a role in biosynthesis of cysteinyl leukotrienes (CysLTs) in myeloid cells. In eosinophils, triggers perinuclear arachidonate release and LTC4 synthesis in a PLA2G4A-independent way. In neutrophils, amplifies CysLTs biosynthesis initiated by PLA2G4A. Promotes immune complex clearance in macrophages via stimulating synthesis of CysLTs, which act through CYSLTR1 to trigger phagocytosis. May regulate antigen processing in antigen-presenting cells. In pulmonary macrophages regulates IL33 production required for activation of group 2 innate lymphoid cells. May play a role in the biosynthesis of N-acyl ethanolamines that regulate energy metabolism. Hydrolyzes N-acyl phosphatidylethanolamines to N-acyl lysophosphatidylethanolamines, which are further cleaved by a lysophospholipase D to release N-acyl ethanolamines. The chain is Phospholipase A2 group V (Pla2g5) from Rattus norvegicus (Rat).